The primary structure comprises 99 residues: Large ribosomal subunit protein uL23 (99 aa).

Belongs to the universal ribosomal protein uL23 family. In terms of assembly, part of the 50S ribosomal subunit. Contacts protein L29, and trigger factor when it is bound to the ribosome.

Its function is as follows. One of the early assembly proteins it binds 23S rRNA. One of the proteins that surrounds the polypeptide exit tunnel on the outside of the ribosome. Forms the main docking site for trigger factor binding to the ribosome. The polypeptide is Large ribosomal subunit protein uL23 (Clavibacter michiganensis subsp. michiganensis (strain NCPPB 382)).